A 517-amino-acid chain; its full sequence is L-amino-acid oxidase (517 aa).

A signal peptide spans 1–18; the sequence is MNVFFMFSLLFLAALESC. Cys29 and Cys192 are oxidised to a cystine. FAD is bound by residues 62-63, 82-83, Arg90, and 106-109; these read MA, EA, and GPMR. A substrate-binding site is contributed by Arg109. Asn191 is a glycosylation site (N-linked (GlcNAc...) asparagine). Residue Val280 participates in FAD binding. A disulfide bond links Cys350 and Cys431. The N-linked (GlcNAc...) asparagine glycan is linked to Asn380. Residue Tyr391 participates in substrate binding. FAD contacts are provided by residues Glu476 and 483 to 488; that span reads GWLDST. 483–484 lines the substrate pocket; that stretch reads GW.

This sequence belongs to the flavin monoamine oxidase family. FIG1 subfamily. As to quaternary structure, homodimer; non-covalently linked. FAD serves as cofactor. N-glycosylated. In terms of tissue distribution, expressed by the venom gland.

It localises to the secreted. It catalyses the reaction an L-alpha-amino acid + O2 + H2O = a 2-oxocarboxylate + H2O2 + NH4(+). In terms of biological role, catalyzes an oxidative deamination of predominantly hydrophobic and aromatic L-amino acids, thus producing hydrogen peroxide that may contribute to the diverse toxic effects of this enzyme. Exhibits diverse biological activities, such as hemorrhage, hemolysis, edema, apoptosis of vascular endothelial cells or tumor cell lines, antibacterial and antiparasitic activities, as well as regulation of platelet aggregation. Effects of snake L-amino oxidases on platelets are controversial, since they either induce aggregation or inhibit agonist-induced aggregation. These different effects are probably due to different experimental conditions. The chain is L-amino-acid oxidase from Notechis scutatus scutatus (Mainland tiger snake).